A 1017-amino-acid polypeptide reads, in one-letter code: A-type ATP synthase subunit A (1017 aa).

The region spanning 396–529 (FLGYLIADGT…FSYLLAKLGI (134 aa)) is the DOD-type homing endonuclease domain.

Belongs to the ATPase alpha/beta chains family. Has multiple subunits with at least A(3), B(3), C, D, E, F, H, I and proteolipid K(x). Post-translationally, this protein undergoes a protein self splicing that involves a post-translational excision of the VDE intervening region (intein) followed by peptide ligation.

The protein resides in the cell membrane. It carries out the reaction ATP + H2O + 4 H(+)(in) = ADP + phosphate + 5 H(+)(out). Component of the A-type ATP synthase that produces ATP from ADP in the presence of a proton gradient across the membrane. The A chain is the catalytic subunit. This chain is A-type ATP synthase subunit A, found in Pyrococcus abyssi (strain GE5 / Orsay).